The following is a 129-amino-acid chain: RutC family protein PM1466 (129 aa).

Belongs to the RutC family.

This is RutC family protein PM1466 from Pasteurella multocida (strain Pm70).